The sequence spans 338 residues: tRNA pseudouridine synthase D (338 aa).

Asp79 (nucleophile) is an active-site residue. In terms of domain architecture, TRUD spans 154–303; the sequence is GVPNYFGEQR…EEAWRANILY (150 aa).

It belongs to the pseudouridine synthase TruD family.

It catalyses the reaction uridine(13) in tRNA = pseudouridine(13) in tRNA. Responsible for synthesis of pseudouridine from uracil-13 in transfer RNAs. In Legionella pneumophila (strain Corby), this protein is tRNA pseudouridine synthase D.